A 296-amino-acid chain; its full sequence is Acetyl-coenzyme A carboxylase carboxyl transferase subunit beta (296 aa).

Residues 26–295 (VWTKCTNCEQ…PFKVGELIIE (270 aa)) form the CoA carboxyltransferase N-terminal domain. Zn(2+)-binding residues include C30, C33, C49, and C52. Residues 30 to 52 (CTNCEQVLYSEELKRNMQVCPKC) form a C4-type zinc finger.

The protein belongs to the AccD/PCCB family. Acetyl-CoA carboxylase is a heterohexamer composed of biotin carboxyl carrier protein (AccB), biotin carboxylase (AccC) and two subunits each of ACCase subunit alpha (AccA) and ACCase subunit beta (AccD). Requires Zn(2+) as cofactor.

It is found in the cytoplasm. It carries out the reaction N(6)-carboxybiotinyl-L-lysyl-[protein] + acetyl-CoA = N(6)-biotinyl-L-lysyl-[protein] + malonyl-CoA. It functions in the pathway lipid metabolism; malonyl-CoA biosynthesis; malonyl-CoA from acetyl-CoA: step 1/1. Functionally, component of the acetyl coenzyme A carboxylase (ACC) complex. Biotin carboxylase (BC) catalyzes the carboxylation of biotin on its carrier protein (BCCP) and then the CO(2) group is transferred by the transcarboxylase to acetyl-CoA to form malonyl-CoA. The chain is Acetyl-coenzyme A carboxylase carboxyl transferase subunit beta from Haemophilus ducreyi (strain 35000HP / ATCC 700724).